The chain runs to 100 residues: Ubiquitin-related modifier 1 homolog (100 aa).

Residue G100 is modified to 1-thioglycine. G100 is covalently cross-linked (Glycyl lysine isopeptide (Gly-Lys) (interchain with K-? in acceptor proteins)).

The protein belongs to the URM1 family. As to quaternary structure, interacts with cer. C-terminal thiocarboxylation occurs in 2 steps, it is first acyl-adenylated (-COAMP) via the hesA/moeB/thiF part of the MOCS3 homolog, then thiocarboxylated (-COSH) via the rhodanese domain of the MOCS3 homolog.

It localises to the cytoplasm. The protein operates within tRNA modification; 5-methoxycarbonylmethyl-2-thiouridine-tRNA biosynthesis. Acts as a sulfur carrier required for 2-thiolation of mcm(5)S(2)U at tRNA wobble positions of cytosolic tRNA(Lys), tRNA(Glu) and tRNA(Gln). Serves as sulfur donor in tRNA 2-thiolation reaction by being thiocarboxylated (-COSH) at its C-terminus by MOCS3. The sulfur is then transferred to tRNA to form 2-thiolation of mcm(5)S(2)U. Also acts as a ubiquitin-like protein (UBL) that is covalently conjugated via an isopeptide bond to lysine residues of target proteins such as Prx2/Jafrac1, Ciao1, Eip71CD and GILT1. The thiocarboxylated form serves as substrate for conjugation and oxidative stress specifically induces the formation of UBL-protein conjugates. This chain is Ubiquitin-related modifier 1 homolog, found in Drosophila willistoni (Fruit fly).